A 324-amino-acid chain; its full sequence is Cyclic GMP-AMP synthase CdnE03 (324 aa).

Mg(2+) contacts are provided by aspartate 87 and aspartate 89. ATP-binding positions include aspartate 89, 144-145 (NK), and aspartate 159. Aspartate 159 contacts Mg(2+). Positions 224 and 243 each coordinate GTP.

The protein belongs to the CD-NTase family. E03 subfamily. The cofactor is Mg(2+).

The catalysed reaction is GTP + ATP = 3',2'-cGAMP + 2 diphosphate. Its activity is regulated as follows. Activated by a virus-derived, approximately 400 nucleotide RNA (called CBASS-activating bacteriophage RNA, cabRNA) that begins in the viral terminase subunit terS and extends into terL. RNA secondary and/or tertiary structure, as well as viral infection itself, are important for CdnE activation. A much longer RNA (escaper RNA) with a different secondary structure, derived from a terS-mutated virus still binds to this protein, but does not activate its nucleotide cyclase activity. Shorter viral-derived RNAs (34 and 49 nt) with extensive predicted secondary structure also activate the enzyme, although not as well as full-length cabRNA. Its function is as follows. Cyclic nucleotide synthase (second messenger synthase) of a CBASS antivirus system. CBASS (cyclic oligonucleotide-based antiphage signaling system) provides immunity against bacteriophage. The CD-NTase protein synthesizes cyclic nucleotides in response to infection; these serve as specific second messenger signals. The signals activate a diverse range of effectors, leading to bacterial cell death and thus abortive phage infection. The effector for this system is downstream Cap15. A type I-B CBASS system. Functionally, cyclic dinucleotide synthase that catalyzes the synthesis of 3',2'-cyclic GMP-AMP (cGAMP) from GTP and ATP upon activation by viral-derived cabRNA. Binds cabRNA via positive charges in its N-terminus. Protects S.aureus against phage infection. When the CBASS operon (cdnE-cap15) is introduced in S.aureus strain RN4220 there is strong protection against lytic DNA phages 80alpha-vir and phi-NM1-gamma-6 but little to no protection against phages phi-NM4-gamma-4 or phi-12-gamma-3. This Staphylococcus schleiferi protein is Cyclic GMP-AMP synthase CdnE03.